A 325-amino-acid chain; its full sequence is E3 ubiquitin-protein ligase EL5 (325 aa).

Residues 1 to 29 form a disordered region; that stretch reads MVRGVEQGGPAMDESSSSSSPSPVSAPAG. The span at 15 to 28 shows a compositional bias: low complexity; it reads SSSSSSPSPVSAPA. Residues 38–58 form a helical membrane-spanning segment; the sequence is IATVAAVLIVFAALTLAFVLL. The tract at residues 70–105 is disordered; it reads TTTSTSGRGRRPRPRRRSGSGGDGGTGGGVDPEVLR. Basic residues predominate over residues 77-87; sequence RGRRPRPRRRS. Residues 88–99 are compositionally biased toward gly residues; it reads GSGGDGGTGGGV. The RING-type; atypical zinc finger occupies 134–176; sequence CAVCLAELEDGEEARFLPRCGHGFHAECVDMWLGSHSTCPLCR. 2 disordered regions span residues 267–289 and 303–325; these read GAAG…GDVE and AATP…HVRN. Low complexity predominate over residues 268–281; sequence AAGSTSSCSCATGG.

Its subcellular location is the cell membrane. It catalyses the reaction S-ubiquitinyl-[E2 ubiquitin-conjugating enzyme]-L-cysteine + [acceptor protein]-L-lysine = [E2 ubiquitin-conjugating enzyme]-L-cysteine + N(6)-ubiquitinyl-[acceptor protein]-L-lysine.. It functions in the pathway protein modification; protein ubiquitination. Functionally, functions as an E3 ubiquitin-protein ligase in cooperation with the E2 ubiquitin conjugating enzymes UBC5A and UBC5B. Involved in root development. Required for the maintenance of cell viability after the initiation of root primordial formation. May mediate the degradation of cytotoxic proteins produced in root cells after the actions of auxin, cytokinin and jasmonic acid. Mediates 'Lys-48'-linked polyubiquitination of MBP in vitro. This chain is E3 ubiquitin-protein ligase EL5 (EL5.1), found in Oryza sativa subsp. japonica (Rice).